Reading from the N-terminus, the 32-residue chain is Dermatoxin-J2 (32 aa).

Q32 is modified (glutamine amide).

In terms of tissue distribution, expressed by the skin glands.

The protein resides in the secreted. Its function is as follows. Antimicrobial peptide. The sequence is that of Dermatoxin-J2 from Phasmahyla jandaia (Jandaia leaf frog).